Consider the following 719-residue polypeptide: Potassium channel KOR2 (719 aa).

Residues 1 to 63 (MAEEYELNEI…VIHPNGRWYR (63 aa)) lie on the Cytoplasmic side of the membrane. A helical membrane pass occupies residues 64–84 (IWANMMFLWSIYSTFFTPFEF). At 85 to 93 (SFFRGLPDQ) the chain is on the extracellular side. The helical transmembrane segment at 94 to 114 (LLDLECVQLVFLADVAVHFFL) threads the bilayer. At 115-137 (AYRDPHTYRMVHDKRHIALRYIK) the chain is on the cytoplasmic side. Residues 138–158 (GSFALDVLGCFPWDAIYKVTG) form a helical membrane-spanning segment. The Extracellular portion of the chain corresponds to 159–164 (RVEAVR). Residues 165-185 (WLVWVRLYRGRKVMAFFKRVE) form a helical; Voltage-sensor membrane-spanning segment. Topologically, residues 186–199 (KDIRVSYLLTRIVK) are cytoplasmic. Residues 200 to 220 (LITVELYCTHTAACGFYYLAT) traverse the membrane as a helical segment. Residues 221 to 255 (TLPPAREGGTWIGSLSLGDARYINFREVDLLTRYV) lie on the Extracellular side of the membrane. An intramembrane region (pore-forming) is located at residues 256 to 275 (TSLYLAIVTMATVGYGDIHA). Over 276–285 (VNTREMAFTV) the chain is Extracellular. Residues 286 to 306 (VYISFSIVLSAYLIGNMTALI) traverse the membrane as a helical segment. Topologically, residues 307 to 719 (VKGSRTERFR…LEQARTVATN (413 aa)) are cytoplasmic. A nucleoside 3',5'-cyclic phosphate is bound at residue 383–503 (LFRGCSDDFL…SQILSNLLKG (121 aa)). ANK repeat units lie at residues 523–556 (KQES…DPSK), 560–589 (DGRT…NVNS), 593–622 (FGNS…ILNL), 624–653 (DAGG…SPNC), and 657–686 (DQRT…DIQA).

The protein belongs to the potassium channel family. Plant (TC 1.A.1.4) subfamily.

The protein resides in the membrane. Its function is as follows. Probable outward-rectifying potassium channel. This is Potassium channel KOR2 from Oryza sativa subsp. japonica (Rice).